Consider the following 220-residue polypeptide: CASP-like protein 1E1 (220 aa).

The Cytoplasmic portion of the chain corresponds to 1-57; it reads METPTPRVKPGFNGVGVGMGSSVNGSSRRAGYYMGPAGAVAVAGGGRAAAAAPVDGC. A helical transmembrane segment spans residues 58-78; it reads SVALRVFVLAATLVSAVVMGV. Residues 79–108 are Extracellular-facing; that stretch reads DRQTSTIRITVTDALPPLEVPLTANWSYSS. An N-linked (GlcNAc...) asparagine glycan is attached at N103. The helical transmembrane segment at 109-129 threads the bilayer; that stretch reads AFVYFVVANAMVCLFSAAALA. Over 130–144 the chain is Cytoplasmic; that stretch reads ACRSRAAMVPVMVGD. A helical membrane pass occupies residues 145–165; that stretch reads LLALALLYSAVGAAAEFGILG. The Extracellular segment spans residues 166–187; it reads ERGNSHVRWPKVCNVYGRFCER. Residues 188–208 form a helical membrane-spanning segment; sequence AMAAVIVSLIAAFANLVLLML. Residues 209–220 are Cytoplasmic-facing; the sequence is NILTIHKSSSYY.

This sequence belongs to the Casparian strip membrane proteins (CASP) family. In terms of assembly, homodimer and heterodimers.

The protein resides in the cell membrane. In Zea mays (Maize), this protein is CASP-like protein 1E1.